Here is a 1363-residue protein sequence, read N- to C-terminus: Spike glycoprotein (1363 aa).

Positions M1–F13 are cleaved as a signal peptide. The Extracellular segment spans residues A14–P1307. A BetaCoV S1-NTD domain is found at V15 to T298. Intrachain disulfides connect C21–C165, C160–C193, C172–C252, C286–C296, and C331–C356. N-linked (GlcNAc...) asparagine; by host glycans are attached at residues N59 and N133. N198 is a glycosylation site (N-linked (GlcNAc...) asparagine; by host). Residues P329–T617 form the BetaCoV S1-CTD domain. N-linked (GlcNAc...) asparagine; by host glycosylation occurs at N359. Cystine bridges form between C374–C427 and C386–C615. N-linked (GlcNAc...) asparagine; by host glycosylation is found at N437, N649, N676, N696, N714, N739, and N788. 2 fusion peptide regions span residues S914–Y935 and E933–Y953. N937 carries N-linked (GlcNAc...) asparagine; by host glycosylation. C938 and C949 are joined by a disulfide. The segment at Q1014 to F1064 is heptad repeat 1. Positions Q1043–I1087 form a coiled coil. N-linked (GlcNAc...) asparagine; by host glycosylation is found at N1194, N1224, N1234, N1253, N1267, and N1288. The segment at A1258–D1296 is heptad repeat 2. Residues T1269–I1297 adopt a coiled-coil conformation. The chain crosses the membrane as a helical span at residues W1308 to I1328. Residues C1329–D1363 lie on the Cytoplasmic side of the membrane. A KxHxx motif is present at residues T1359–D1363.

Belongs to the betacoronaviruses spike protein family. Homotrimer; each monomer consists of a S1 and a S2 subunit. The resulting peplomers protrude from the virus surface as spikes. In terms of processing, specific enzymatic cleavages in vivo yield mature proteins. The precursor is processed into S1 and S2 by host cell furin or another cellular protease to yield the mature S1 and S2 proteins. Additionally, a second cleavage leads to the release of a fusion peptide after viral attachment to host cell receptor. The cytoplasmic Cys-rich domain is palmitoylated. Spike glycoprotein is digested within host endosomes.

The protein localises to the virion membrane. It is found in the host endoplasmic reticulum-Golgi intermediate compartment membrane. It localises to the host cell membrane. Functionally, attaches the virion to the cell membrane by interacting with host receptor, initiating the infection. Mediates fusion of the virion and cellular membranes by acting as a class I viral fusion protein. Under the current model, the protein has at least three conformational states: pre-fusion native state, pre-hairpin intermediate state, and post-fusion hairpin state. During viral and target cell membrane fusion, the coiled coil regions (heptad repeats) assume a trimer-of-hairpins structure, positioning the fusion peptide in close proximity to the C-terminal region of the ectodomain. The formation of this structure appears to drive apposition and subsequent fusion of viral and target cell membranes. In terms of biological role, acts as a viral fusion peptide which is unmasked following S2 cleavage occurring upon virus endocytosis. The polypeptide is Spike glycoprotein (Bos taurus (Bovine)).